Here is a 306-residue protein sequence, read N- to C-terminus: UDP-3-O-acyl-N-acetylglucosamine deacetylase (306 aa).

Residues histidine 79, histidine 238, and aspartate 242 each contribute to the Zn(2+) site. Catalysis depends on histidine 265, which acts as the Proton donor.

Belongs to the LpxC family. Requires Zn(2+) as cofactor.

It catalyses the reaction a UDP-3-O-[(3R)-3-hydroxyacyl]-N-acetyl-alpha-D-glucosamine + H2O = a UDP-3-O-[(3R)-3-hydroxyacyl]-alpha-D-glucosamine + acetate. Its pathway is glycolipid biosynthesis; lipid IV(A) biosynthesis; lipid IV(A) from (3R)-3-hydroxytetradecanoyl-[acyl-carrier-protein] and UDP-N-acetyl-alpha-D-glucosamine: step 2/6. Its function is as follows. Catalyzes the hydrolysis of UDP-3-O-myristoyl-N-acetylglucosamine to form UDP-3-O-myristoylglucosamine and acetate, the committed step in lipid A biosynthesis. In Shewanella denitrificans (strain OS217 / ATCC BAA-1090 / DSM 15013), this protein is UDP-3-O-acyl-N-acetylglucosamine deacetylase.